The sequence spans 277 residues: 3-methyl-2-oxobutanoate hydroxymethyltransferase (277 aa).

The Mg(2+) site is built by Asp-53 and Asp-96. 3-methyl-2-oxobutanoate contacts are provided by residues 53–54 (DS), Asp-96, and Lys-126. Glu-128 is a Mg(2+) binding site. The active-site Proton acceptor is the Glu-195.

It belongs to the PanB family. In terms of assembly, homodecamer; pentamer of dimers. Mg(2+) serves as cofactor.

The protein resides in the cytoplasm. The catalysed reaction is 3-methyl-2-oxobutanoate + (6R)-5,10-methylene-5,6,7,8-tetrahydrofolate + H2O = 2-dehydropantoate + (6S)-5,6,7,8-tetrahydrofolate. It participates in cofactor biosynthesis; (R)-pantothenate biosynthesis; (R)-pantoate from 3-methyl-2-oxobutanoate: step 1/2. In terms of biological role, catalyzes the reversible reaction in which hydroxymethyl group from 5,10-methylenetetrahydrofolate is transferred onto alpha-ketoisovalerate to form ketopantoate. In Prosthecochloris aestuarii (strain DSM 271 / SK 413), this protein is 3-methyl-2-oxobutanoate hydroxymethyltransferase.